The primary structure comprises 515 residues: Transcription termination factor Rho (515 aa).

The region spanning 146–221 (DVLFTGVLDV…VKIKSINDQD (76 aa)) is the Rho RNA-BD domain. Residues 264–269 (GKGQRA), 276–281 (KAGKTT), and R307 contribute to the ATP site.

Belongs to the Rho family. As to quaternary structure, homohexamer. The homohexamer assembles into an open ring structure.

Functionally, facilitates transcription termination by a mechanism that involves Rho binding to the nascent RNA, activation of Rho's RNA-dependent ATPase activity, and release of the mRNA from the DNA template. The chain is Transcription termination factor Rho from Borreliella burgdorferi (strain ATCC 35210 / DSM 4680 / CIP 102532 / B31) (Borrelia burgdorferi).